We begin with the raw amino-acid sequence, 333 residues long: Adenosine deaminase (333 aa).

Residues H12 and H14 each contribute to the Zn(2+) site. H14, D16, and G170 together coordinate substrate. H197 contributes to the Zn(2+) binding site. Catalysis depends on E200, which acts as the Proton donor. Residue D278 participates in Zn(2+) binding. D279 is a substrate binding site.

The protein belongs to the metallo-dependent hydrolases superfamily. Adenosine and AMP deaminases family. Adenosine deaminase subfamily. Zn(2+) serves as cofactor.

The catalysed reaction is adenosine + H2O + H(+) = inosine + NH4(+). It carries out the reaction 2'-deoxyadenosine + H2O + H(+) = 2'-deoxyinosine + NH4(+). Catalyzes the hydrolytic deamination of adenosine and 2-deoxyadenosine. This Edwardsiella ictaluri (strain 93-146) protein is Adenosine deaminase.